Consider the following 86-residue polypeptide: Small ribosomal subunit protein bS16 (86 aa).

This sequence belongs to the bacterial ribosomal protein bS16 family.

The chain is Small ribosomal subunit protein bS16 from Mycoplasmoides gallisepticum (strain R(low / passage 15 / clone 2)) (Mycoplasma gallisepticum).